Here is a 103-residue protein sequence, read N- to C-terminus: N(4)-acetylcytidine amidohydrolase (103 aa).

The 89-residue stretch at 6–94 folds into the ASCH domain; it reads ITFFQRFQND…IAEIYPNQTQ (89 aa). Residue Lys-21 is the Proton acceptor of the active site. Thr-24 serves as the catalytic Nucleophile. Glu-74 (proton donor) is an active-site residue.

Belongs to the N(4)-acetylcytidine amidohydrolase family.

The catalysed reaction is N(4)-acetylcytidine + H2O = cytidine + acetate + H(+). The enzyme catalyses N(4)-acetyl-2'-deoxycytidine + H2O = 2'-deoxycytidine + acetate + H(+). It carries out the reaction N(4)-acetylcytosine + H2O = cytosine + acetate + H(+). Its function is as follows. Catalyzes the hydrolysis of N(4)-acetylcytidine (ac4C). The chain is N(4)-acetylcytidine amidohydrolase (yqfB) from Salmonella heidelberg (strain SL476).